The following is a 446-amino-acid chain: D(1A) dopamine receptor (446 aa).

At 1–23 the chain is on the extracellular side; sequence MRTLNTSAMDGTGLVVERDFSVR. A glycan (N-linked (GlcNAc...) asparagine) is linked at N5. A helical transmembrane segment spans residues 24-49; that stretch reads ILTACFLSLLILSTLLGNTLVCAAVI. Over 50-60 the chain is Cytoplasmic; sequence RFRHLRSKVTN. A helical transmembrane segment spans residues 61–87; it reads FFVISLAVSDLLVAVLVMPWKAVAEIA. Over 88–96 the chain is Extracellular; the sequence is GFWPFGSFC. Cysteines 96 and 186 form a disulfide. A helical transmembrane segment spans residues 97–119; the sequence is NIWVAFDIMCSTASILNLCVISV. Topologically, residues 120–138 are cytoplasmic; sequence DRYWAISSPFRYERKMTPK. Residues 139–163 form a helical membrane-spanning segment; it reads AAFILISVAWTLSVLISFIPVQLSW. The Extracellular segment spans residues 164-192; sequence HKAKPTSPSDGNATSLAETIDNCDSSLSR. N-linked (GlcNAc...) asparagine glycosylation occurs at N175. A helical transmembrane segment spans residues 193-218; that stretch reads TYAISSSVISFYIPVAIMIVTYTRIY. Over 219-272 the chain is Cytoplasmic; that stretch reads RIAQKQIRRIAALERAAVHAKNCQTTTGNGKPVECSQPESSFKMSFKRETKVLK. Residues 273–299 traverse the membrane as a helical segment; the sequence is TLSVIMGVFVCCWLPFFILNCILPFCG. Residues 300-312 lie on the Extracellular side of the membrane; sequence SGETQPFCIDSIT. The helical transmembrane segment at 313-337 threads the bilayer; that stretch reads FDVFVWFGWANSSLNPIIYAFNADF. Topologically, residues 338–446 are cytoplasmic; the sequence is RKAFSTLLGC…PITQNGQHPT (109 aa). 2 S-palmitoyl cysteine lipidation sites follow: C347 and C351.

This sequence belongs to the G-protein coupled receptor 1 family. As to quaternary structure, interacts with DNAJC14 via its C-terminus. Interacts with DRD2. Interacts with DORIP1.

The protein resides in the cell membrane. The protein localises to the endoplasmic reticulum membrane. It localises to the cell projection. Its subcellular location is the cilium membrane. It is found in the dendrite. The protein resides in the dendritic spine. Its function is as follows. Dopamine receptor whose activity is mediated by G proteins which activate adenylyl cyclase. The protein is D(1A) dopamine receptor (DRD1) of Macaca mulatta (Rhesus macaque).